The primary structure comprises 276 residues: uncharacterized protein (276 aa).

One can recognise an AB hydrolase-1 domain in the interval 20-137 (PVLIFIPGAN…PPINTFLPDS (118 aa)). A disordered region spans residues 57-76 (GESELTEPLPDSASNPDSDY).

Belongs to the AB hydrolase superfamily.

This is an uncharacterized protein from Staphylococcus aureus (strain bovine RF122 / ET3-1).